Here is a 397-residue protein sequence, read N- to C-terminus: Metallophosphoesterase 1 (397 aa).

Residues 27–47 (IAVVFAVLLFCEFLIYYLAIF) form a helical membrane-spanning segment. 6 residues coordinate a divalent metal cation: Asp-77, Asp-119, Asn-157, His-250, His-304, and His-306. Residues 357-377 (VVLIIYCGMVGFLVVLTLTHF) traverse the membrane as a helical segment. Residues 393–397 (KRKTR) carry the Di-lysine motif motif.

This sequence belongs to the metallophosphoesterase superfamily. MPPE1 family. In terms of assembly, interacts with GPI-anchor proteins (via the GPI portion). Interacts with TMED10. Requires Mn(2+) as cofactor.

The protein localises to the endoplasmic reticulum-Golgi intermediate compartment membrane. Functionally, metallophosphoesterase that catalyzes the removal of a side-chain ethanolamine-phosphate (EtNP) from the second mannose of the GPI-anchor protein intermediate. Participates in the glycan remodeling steps of GPI-anchor maturation to allow an efficient transport of GPI-anchor proteins from the endoplasmic reticulum to the Golgi. In Pongo abelii (Sumatran orangutan), this protein is Metallophosphoesterase 1.